The chain runs to 198 residues: Large ribosomal subunit protein bL25 (198 aa).

Belongs to the bacterial ribosomal protein bL25 family. CTC subfamily. Part of the 50S ribosomal subunit; part of the 5S rRNA/L5/L18/L25 subcomplex. Contacts the 5S rRNA. Binds to the 5S rRNA independently of L5 and L18.

Functionally, this is one of the proteins that binds to the 5S RNA in the ribosome where it forms part of the central protuberance. The chain is Large ribosomal subunit protein bL25 from Phocaeicola vulgatus (strain ATCC 8482 / DSM 1447 / JCM 5826 / CCUG 4940 / NBRC 14291 / NCTC 11154) (Bacteroides vulgatus).